We begin with the raw amino-acid sequence, 195 residues long: Rac-like GTP-binding protein ARAC4 (195 aa).

Residues 12-19 (GDGAVGKT), 30-37 (FPTDYVPT), 59-63 (DTAGQ), and 117-120 (TKLD) each bind GTP. The Effector region signature appears at 34–42 (YVPTVFDNF). Cys-192 carries the post-translational modification Cysteine methyl ester. A lipid anchor (S-geranylgeranyl cysteine) is attached at Cys-192. Residues 193–195 (AFL) constitute a propeptide, removed in mature form.

The protein belongs to the small GTPase superfamily. Rho family. In terms of assembly, interacts with SPK1, ICR1, ICR5 and PIR. In terms of tissue distribution, ubiquitous.

The protein resides in the cytoplasm. It is found in the cell membrane. Functionally, inactive GDP-bound Rho GTPases reside in the cytosol, are found in a complex with Rho GDP-dissociation inhibitors (Rho GDIs), and are released from the GDI protein in order to translocate to membranes upon activation. Involved in cell polarity control during the actin-dependent tip growth of root hairs, thus regulating root hair length and root hair initiation. Contributes, in a SPK1-dependent manner, to the prevention of cortical microtubules organization into parallel arrays oriented perpendicular to the axis of cell elongation to limit anisotropic cell growth during petal development. May regulate a WAVE complex that activates the Arp2/3 complex. The polypeptide is Rac-like GTP-binding protein ARAC4 (Arabidopsis thaliana (Mouse-ear cress)).